The sequence spans 273 residues: F-actin-capping protein subunit alpha (273 aa).

Belongs to the F-actin-capping protein alpha subunit family. In terms of assembly, heterodimer of an alpha and a beta subunit.

It localises to the cytoplasm. It is found in the cytoskeleton. F-actin-capping proteins bind in a Ca(2+)-independent manner to the fast growing ends of actin filaments (barbed end) thereby blocking the exchange of subunits at these ends. Unlike other capping proteins (such as gelsolin and severin), these proteins do not sever actin filaments. The polypeptide is F-actin-capping protein subunit alpha (cap1) (Emericella nidulans (strain FGSC A4 / ATCC 38163 / CBS 112.46 / NRRL 194 / M139) (Aspergillus nidulans)).